The chain runs to 337 residues: Inositol 2-dehydrogenase (337 aa).

Belongs to the Gfo/Idh/MocA family. In terms of assembly, homotetramer.

The catalysed reaction is myo-inositol + NAD(+) = scyllo-inosose + NADH + H(+). In terms of biological role, involved in the oxidation of myo-inositol (MI) to 2-keto-myo-inositol (2KMI or 2-inosose). This chain is Inositol 2-dehydrogenase, found in Burkholderia lata (strain ATCC 17760 / DSM 23089 / LMG 22485 / NCIMB 9086 / R18194 / 383).